The primary structure comprises 122 residues: MIQPQTHLNVADNSGARELMCIRIIGASNHRYAHIGDVIVAVIKEAVPNMPLERSEVIRAVIVRTCKELKRDNGMIIRYDDNAAVVIDQEGNPKGTRVFGAIARELRQLNFTKIVSLAPEVL.

The protein belongs to the universal ribosomal protein uL14 family. Part of the 50S ribosomal subunit.

Its subcellular location is the plastid. It localises to the chloroplast. Functionally, binds to 23S rRNA. The protein is Large ribosomal subunit protein uL14c of Illicium oligandrum (Star anise).